The following is a 580-amino-acid chain: MNLFTEIRTLVTAELGAMTEAGDLPAGLDLSAVAVEPPRDPAHGDMSTNAAMVLAKPSGKPPRAIAEALATRLAADPRISSAEVAGPGFLNLRLRPAVWQGMVATILQAGDTYGRSTIGAGQKVNVEFVSANPTGPMHVGHVRGAVVGDALARLLAYAGWNVTREYYINDGGAQVDVLARSAFERYREAHGLEPEIREGLYPGDYLIPVGEALKAKYGDSLLDKGEQHWLKEVREFATEMMMQMIREDLAALGVEMDVYSSEKALYGTGKIEAALDRLKEMDLIYEGVLEPPKGKTPEDWEPREQTLFRSTAHGDDVDRPVKKSDGSWTYFAPDIAYHYDKVTRGFDQLIDIFGADHGGYVKRMKAAVAALSAGRVPLDIKLIQLVKLWKNGEPFKMSKRAGTYVTLRDVVEQVGTDVTRFVMLTRKNDATLDFDFDKVLEQSKENPVFYVQYANARINSVLRKAREQGMDVSDATLATADLDRLDHPAEIALIAKLAEWPRLVEIAARTNEPHRVAFYLHELASELHGLWNRGNDEAGLRFLQDDPVVSQAKIALARAVGVVICAGLGILGVTPVEEMR.

The 'HIGH' region signature appears at 131–141 (ANPTGPMHVGH).

It belongs to the class-I aminoacyl-tRNA synthetase family. In terms of assembly, monomer.

The protein resides in the cytoplasm. It carries out the reaction tRNA(Arg) + L-arginine + ATP = L-arginyl-tRNA(Arg) + AMP + diphosphate. In Cereibacter sphaeroides (strain ATCC 17029 / ATH 2.4.9) (Rhodobacter sphaeroides), this protein is Arginine--tRNA ligase.